The chain runs to 403 residues: Ribosomal RNA large subunit methyltransferase I (403 aa).

The PUA domain maps to 9–88; the sequence is YPRLVLSKGR…EPVDIAFFTR (80 aa).

Belongs to the methyltransferase superfamily. RlmI family.

Its subcellular location is the cytoplasm. The catalysed reaction is cytidine(1962) in 23S rRNA + S-adenosyl-L-methionine = 5-methylcytidine(1962) in 23S rRNA + S-adenosyl-L-homocysteine + H(+). Specifically methylates the cytosine at position 1962 (m5C1962) of 23S rRNA. This is Ribosomal RNA large subunit methyltransferase I from Salmonella arizonae (strain ATCC BAA-731 / CDC346-86 / RSK2980).